We begin with the raw amino-acid sequence, 230 residues long: uncharacterized protein (230 aa).

A signal peptide spans 1 to 21; sequence MARYDARLRGIGKAHACSAFA. Residues 47-190 form a disordered region; it reads SASVQENFIA…TVQTSSSGDP (144 aa). Residues 141–150 are compositionally biased toward polar residues; that stretch reads PQSQTSANSQ. The segment covering 151–165 has biased composition (basic and acidic residues); it reads KKPEIRCRERSKNAR. Positions 173-188 are enriched in polar residues; it reads AVATNEAETVQTSSSG.

To R.meliloti RA0936 and y4aO.

This is an uncharacterized protein from Sinorhizobium fredii (strain NBRC 101917 / NGR234).